A 382-amino-acid polypeptide reads, in one-letter code: Dodecanoyl-[acyl-carrier-protein] hydrolase, chloroplastic (382 aa).

Residues methionine 1–asparagine 83 constitute a chloroplast transit peptide. Catalysis depends on residues asparagine 283, histidine 285, and cysteine 320.

It belongs to the acyl-ACP thioesterase family. As to quaternary structure, forms homodimers. In terms of tissue distribution, expressed in developing cotyledons. Not detected in leaves.

It localises to the plastid. Its subcellular location is the chloroplast. It catalyses the reaction dodecanoyl-[ACP] + H2O = dodecanoate + holo-[ACP] + H(+). In terms of biological role, plays an essential role in chain termination during de novo fatty acid synthesis. High thioesterase activity for lauroyl-ACP versus other acyl-ACPs. The polypeptide is Dodecanoyl-[acyl-carrier-protein] hydrolase, chloroplastic (Umbellularia californica (California bay laurel)).